Reading from the N-terminus, the 163-residue chain is CASP-like protein 1C3 (163 aa).

Over 1-6 the chain is Cytoplasmic; it reads MAKIKK. Residues 7–27 form a helical membrane-spanning segment; the sequence is IFTNFLRLLALAATVVAIVFM. Residues 28-52 lie on the Extracellular side of the membrane; that stretch reads VTSHDSAQVLNLTFTVKYSNTPVFK. N-linked (GlcNAc...) asparagine glycosylation is present at Asn38. A helical membrane pass occupies residues 53–73; that stretch reads YFVIAEAIAGGYIVISILLSF. Residues 74-79 lie on the Cytoplasmic side of the membrane; the sequence is KSLFWR. A helical transmembrane segment spans residues 80–100; that stretch reads LLVILDMVTAVLLTSSISAAL. Residues 101–128 are Extracellular-facing; the sequence is AIAQVGKKGNTHAGWLPVCEQVPDFCDQ. The chain crosses the membrane as a helical span at residues 129 to 149; that stretch reads VTIALIAGFAAAIIYFVLLLC. Over 150–163 the chain is Cytoplasmic; it reads SLYVVLSPIFVVTP.

The protein belongs to the Casparian strip membrane proteins (CASP) family. Homodimer and heterodimers.

It is found in the cell membrane. The polypeptide is CASP-like protein 1C3 (Populus trichocarpa (Western balsam poplar)).